A 412-amino-acid chain; its full sequence is Branched-chain alpha-ketoacid dehydrogenase kinase (412 aa).

A mitochondrion-targeting transit peptide spans 1–30 (MILASVLRSGPGGGLPLRPLLGPALALRAR). Ser31 is modified (phosphoserine). Phosphoserine; by autocatalysis is present on Ser52. The Histidine kinase domain maps to 159–404 (LDDHKDVVTL…DVYLRLRHID (246 aa)). Residues Lys192 and Lys233 each carry the N6-acetyllysine modification. The ATP site is built by Asn279 and Asp315. Position 279 (Asn279) interacts with Mg(2+). Val328, Asp330, and Phe333 together coordinate K(+). Residues Thr334 and Thr335 each contribute to the ATP site. Phosphoserine occurs at positions 356 and 360. The ATP site is built by His364, Gly367, and Leu370. Gly367 is a K(+) binding site.

The protein belongs to the PDK/BCKDK protein kinase family. In terms of assembly, homodimer. Homotetramer. Dimerizes through interaction of two opposing nucleotide-binding domains. Interacts with E2 component of the branched-chain alpha-ketoacid dehydrogenase (BCKDH) complex. Competes with BCKDK for binding to the E2 component; this interaction is modulated by branched-chain alpha-keto acids. At steady state, BCKDH holoenzyme contains BCKDK and BCKDHA is phosphorylated. In response to high levels of branched-chain alpha-keto acids, the inhibitory BCKDK is replaced by activating PPM1K leading to BCKDHA dephosphorylation and BCAA degradation. Autophosphorylated. In terms of tissue distribution, ubiquitous.

The protein resides in the mitochondrion matrix. It carries out the reaction L-seryl-[3-methyl-2-oxobutanoate dehydrogenase] + ATP = O-phospho-L-seryl-[3-methyl-2-oxobutanoate dehydrogenase] + ADP + H(+). The enzyme catalyses L-seryl-[protein] + ATP = O-phospho-L-seryl-[protein] + ADP + H(+). It participates in protein modification. Allosterically inhibited by certain thiazoles and thiophenes: thiazoles increase interaction with DBT/BCKDH-E2, whereas thiophenes reduce this interaction. Inhibited by 3,6- dichlorobenzo[b]thiophene-2-carboxylic acid (BT2). The ATP binding is mediated by both potassium and magnesium ions. Its function is as follows. Serine/threonine-protein kinase component of macronutrients metabolism. Forms a functional kinase and phosphatase pair with PPM1K, serving as a metabolic regulatory node that coordinates branched-chain amino acids (BCAAs) with glucose and lipid metabolism via two distinct phosphoprotein targets: mitochondrial BCKDHA subunit of the branched-chain alpha-ketoacid dehydrogenase (BCKDH) complex and cytosolic ACLY, a lipogenic enzyme of Krebs cycle. Phosphorylates and inactivates mitochondrial BCKDH complex a multisubunit complex consisting of three multimeric components each involved in different steps of BCAA catabolism: E1 composed of BCKDHA and BCKDHB, E2 core composed of DBT monomers, and E3 composed of DLD monomers. Associates with the E2 component of BCKDH complex and phosphorylates BCKDHA on Ser-337, leading to conformational changes that interrupt substrate channeling between E1 and E2 and inactivates the BCKDH complex. Phosphorylates ACLY on Ser-455 in response to changes in cellular carbohydrate abundance such as occurs during fasting to feeding metabolic transition. Refeeding stimulates MLXIPL/ChREBP transcription factor, leading to increased BCKDK to PPM1K expression ratio, phosphorylation and activation of ACLY that ultimately results in the generation of malonyl-CoA and oxaloacetate immediate substrates of de novo lipogenesis and glucogenesis, respectively. Recognizes phosphosites having SxxE/D canonical motif. The protein is Branched-chain alpha-ketoacid dehydrogenase kinase of Homo sapiens (Human).